Consider the following 160-residue polypeptide: Cytochrome b6-f complex subunit 4 (160 aa).

A run of 3 helical transmembrane segments spans residues 36-56 (LLYI…GLAV), 95-115 (LLGV…PFPE), and 131-151 (TVFS…ALPI).

This sequence belongs to the cytochrome b family. PetD subfamily. As to quaternary structure, the 4 large subunits of the cytochrome b6-f complex are cytochrome b6, subunit IV (17 kDa polypeptide, petD), cytochrome f and the Rieske protein, while the 4 small subunits are petG, petL, petM and petN. The complex functions as a dimer.

The protein resides in the plastid. It is found in the chloroplast thylakoid membrane. In terms of biological role, component of the cytochrome b6-f complex, which mediates electron transfer between photosystem II (PSII) and photosystem I (PSI), cyclic electron flow around PSI, and state transitions. The sequence is that of Cytochrome b6-f complex subunit 4 from Huperzia lucidula (Shining clubmoss).